Consider the following 73-residue polypeptide: Translation initiation factor IF-1 (73 aa).

One can recognise an S1-like domain in the interval methionine 1 to lysine 72.

Belongs to the IF-1 family. In terms of assembly, component of the 30S ribosomal translation pre-initiation complex which assembles on the 30S ribosome in the order IF-2 and IF-3, IF-1 and N-formylmethionyl-tRNA(fMet); mRNA recruitment can occur at any time during PIC assembly.

The protein localises to the cytoplasm. One of the essential components for the initiation of protein synthesis. Stabilizes the binding of IF-2 and IF-3 on the 30S subunit to which N-formylmethionyl-tRNA(fMet) subsequently binds. Helps modulate mRNA selection, yielding the 30S pre-initiation complex (PIC). Upon addition of the 50S ribosomal subunit IF-1, IF-2 and IF-3 are released leaving the mature 70S translation initiation complex. This is Translation initiation factor IF-1 from Psychrobacter arcticus (strain DSM 17307 / VKM B-2377 / 273-4).